Here is a 660-residue protein sequence, read N- to C-terminus: Bifunctional polymyxin resistance protein ArnA (660 aa).

The segment at 1-304 (MKAVIFAYHD…TLGLVAGARL (304 aa)) is formyltransferase ArnAFT. Histidine 104 acts as the Proton donor; for formyltransferase activity in catalysis. (6R)-10-formyltetrahydrofolate is bound by residues arginine 114 and 136 to 140 (VKRAD). Positions 314-660 (RRIRVLILGV…RSVDVAERAS (347 aa)) are dehydrogenase ArnADH. NAD(+) is bound by residues aspartate 347 and 368–369 (DI). UDP-alpha-D-glucuronate-binding positions include alanine 393, tyrosine 398, and 432-433 (TS). Glutamate 434 functions as the Proton acceptor; for decarboxylase activity in the catalytic mechanism. UDP-alpha-D-glucuronate contacts are provided by residues arginine 460, asparagine 492, 526-535 (KLIDGGQQKR), and tyrosine 613. Residue arginine 619 is the Proton donor; for decarboxylase activity of the active site.

This sequence in the N-terminal section; belongs to the Fmt family. UDP-L-Ara4N formyltransferase subfamily. It in the C-terminal section; belongs to the NAD(P)-dependent epimerase/dehydratase family. UDP-glucuronic acid decarboxylase subfamily. As to quaternary structure, homohexamer, formed by a dimer of trimers.

It carries out the reaction UDP-alpha-D-glucuronate + NAD(+) = UDP-beta-L-threo-pentopyranos-4-ulose + CO2 + NADH. It catalyses the reaction UDP-4-amino-4-deoxy-beta-L-arabinose + (6R)-10-formyltetrahydrofolate = UDP-4-deoxy-4-formamido-beta-L-arabinose + (6S)-5,6,7,8-tetrahydrofolate + H(+). It participates in nucleotide-sugar biosynthesis; UDP-4-deoxy-4-formamido-beta-L-arabinose biosynthesis; UDP-4-deoxy-4-formamido-beta-L-arabinose from UDP-alpha-D-glucuronate: step 1/3. The protein operates within nucleotide-sugar biosynthesis; UDP-4-deoxy-4-formamido-beta-L-arabinose biosynthesis; UDP-4-deoxy-4-formamido-beta-L-arabinose from UDP-alpha-D-glucuronate: step 3/3. It functions in the pathway bacterial outer membrane biogenesis; lipopolysaccharide biosynthesis. Bifunctional enzyme that catalyzes the oxidative decarboxylation of UDP-glucuronic acid (UDP-GlcUA) to UDP-4-keto-arabinose (UDP-Ara4O) and the addition of a formyl group to UDP-4-amino-4-deoxy-L-arabinose (UDP-L-Ara4N) to form UDP-L-4-formamido-arabinose (UDP-L-Ara4FN). The modified arabinose is attached to lipid A and is required for resistance to polymyxin and cationic antimicrobial peptides. The sequence is that of Bifunctional polymyxin resistance protein ArnA from Salmonella paratyphi C (strain RKS4594).